We begin with the raw amino-acid sequence, 411 residues long: S-adenosylmethionine synthase (411 aa).

His-15 is a binding site for ATP. Position 17 (Asp-17) interacts with Mg(2+). A K(+)-binding site is contributed by Glu-43. L-methionine contacts are provided by Glu-56 and Gln-100. The interval 100–110 (QSPDIAQGVNE) is flexible loop. ATP is bound by residues 171–173 (DGK), 248–249 (KF), Asp-257, 263–264 (RK), Ala-280, and Lys-284. An L-methionine-binding site is contributed by Asp-257. Lys-288 contributes to the L-methionine binding site.

This sequence belongs to the AdoMet synthase family. Homotetramer; dimer of dimers. Mg(2+) serves as cofactor. Requires K(+) as cofactor.

Its subcellular location is the cytoplasm. The catalysed reaction is L-methionine + ATP + H2O = S-adenosyl-L-methionine + phosphate + diphosphate. It participates in amino-acid biosynthesis; S-adenosyl-L-methionine biosynthesis; S-adenosyl-L-methionine from L-methionine: step 1/1. Catalyzes the formation of S-adenosylmethionine (AdoMet) from methionine and ATP. The overall synthetic reaction is composed of two sequential steps, AdoMet formation and the subsequent tripolyphosphate hydrolysis which occurs prior to release of AdoMet from the enzyme. The sequence is that of S-adenosylmethionine synthase from Synechococcus sp. (strain CC9605).